The following is a 113-amino-acid chain: Large ribosomal subunit protein eL31A (113 aa).

It belongs to the eukaryotic ribosomal protein eL31 family. As to quaternary structure, component of the large ribosomal subunit (LSU). Mature yeast ribosomes consist of a small (40S) and a large (60S) subunit. The 40S small subunit contains 1 molecule of ribosomal RNA (18S rRNA) and 33 different proteins (encoded by 57 genes). The large 60S subunit contains 3 rRNA molecules (25S, 5.8S and 5S rRNA) and 46 different proteins (encoded by 81 genes).

Its subcellular location is the cytoplasm. Component of the ribosome, a large ribonucleoprotein complex responsible for the synthesis of proteins in the cell. The small ribosomal subunit (SSU) binds messenger RNAs (mRNAs) and translates the encoded message by selecting cognate aminoacyl-transfer RNA (tRNA) molecules. The large subunit (LSU) contains the ribosomal catalytic site termed the peptidyl transferase center (PTC), which catalyzes the formation of peptide bonds, thereby polymerizing the amino acids delivered by tRNAs into a polypeptide chain. The nascent polypeptides leave the ribosome through a tunnel in the LSU and interact with protein factors that function in enzymatic processing, targeting, and the membrane insertion of nascent chains at the exit of the ribosomal tunnel. The chain is Large ribosomal subunit protein eL31A from Saccharomyces cerevisiae (strain ATCC 204508 / S288c) (Baker's yeast).